The primary structure comprises 96 residues: Co-chaperonin GroES 2 (96 aa).

This sequence belongs to the GroES chaperonin family. As to quaternary structure, heptamer of 7 subunits arranged in a ring. Interacts with the chaperonin GroEL.

It is found in the cytoplasm. Functionally, together with the chaperonin GroEL, plays an essential role in assisting protein folding. The GroEL-GroES system forms a nano-cage that allows encapsulation of the non-native substrate proteins and provides a physical environment optimized to promote and accelerate protein folding. GroES binds to the apical surface of the GroEL ring, thereby capping the opening of the GroEL channel. The polypeptide is Co-chaperonin GroES 2 (Vibrio cholerae serotype O1 (strain ATCC 39315 / El Tor Inaba N16961)).